Consider the following 196-residue polypeptide: dITP/XTP pyrophosphatase (196 aa).

Residue 10 to 15 coordinates substrate; that stretch reads TTNPHK. The Proton acceptor role is filled by D68. Mg(2+) is bound at residue D68. Substrate contacts are provided by residues S69, 148-151, and 175-176; these read FGYD and HR.

The protein belongs to the HAM1 NTPase family. In terms of assembly, homodimer. Requires Mg(2+) as cofactor.

It catalyses the reaction XTP + H2O = XMP + diphosphate + H(+). The catalysed reaction is dITP + H2O = dIMP + diphosphate + H(+). The enzyme catalyses ITP + H2O = IMP + diphosphate + H(+). Its function is as follows. Pyrophosphatase that catalyzes the hydrolysis of nucleoside triphosphates to their monophosphate derivatives, with a high preference for the non-canonical purine nucleotides XTP (xanthosine triphosphate), dITP (deoxyinosine triphosphate) and ITP. Seems to function as a house-cleaning enzyme that removes non-canonical purine nucleotides from the nucleotide pool, thus preventing their incorporation into DNA/RNA and avoiding chromosomal lesions. The protein is dITP/XTP pyrophosphatase of Thermotoga maritima (strain ATCC 43589 / DSM 3109 / JCM 10099 / NBRC 100826 / MSB8).